The primary structure comprises 348 residues: Uroporphyrinogen decarboxylase (348 aa).

Substrate-binding positions include 27–31, Phe46, Asp76, Tyr152, Ser207, and His320; that span reads RQAGR.

It belongs to the uroporphyrinogen decarboxylase family. As to quaternary structure, homodimer.

The protein resides in the cytoplasm. It carries out the reaction uroporphyrinogen III + 4 H(+) = coproporphyrinogen III + 4 CO2. It participates in porphyrin-containing compound metabolism; protoporphyrin-IX biosynthesis; coproporphyrinogen-III from 5-aminolevulinate: step 4/4. In terms of biological role, catalyzes the decarboxylation of four acetate groups of uroporphyrinogen-III to yield coproporphyrinogen-III. This is Uroporphyrinogen decarboxylase from Bacillus cereus (strain AH820).